The primary structure comprises 351 residues: Phosphoribosylformylglycinamidine cyclo-ligase (351 aa).

The protein belongs to the AIR synthase family.

The protein localises to the cytoplasm. It catalyses the reaction 2-formamido-N(1)-(5-O-phospho-beta-D-ribosyl)acetamidine + ATP = 5-amino-1-(5-phospho-beta-D-ribosyl)imidazole + ADP + phosphate + H(+). Its pathway is purine metabolism; IMP biosynthesis via de novo pathway; 5-amino-1-(5-phospho-D-ribosyl)imidazole from N(2)-formyl-N(1)-(5-phospho-D-ribosyl)glycinamide: step 2/2. The chain is Phosphoribosylformylglycinamidine cyclo-ligase from Burkholderia cenocepacia (strain ATCC BAA-245 / DSM 16553 / LMG 16656 / NCTC 13227 / J2315 / CF5610) (Burkholderia cepacia (strain J2315)).